The sequence spans 211 residues: Large ribosomal subunit protein uL3 (211 aa).

The residue at position 150 (Gln150) is an N5-methylglutamine.

This sequence belongs to the universal ribosomal protein uL3 family. As to quaternary structure, part of the 50S ribosomal subunit. Forms a cluster with proteins L14 and L19. Post-translationally, methylated by PrmB.

In terms of biological role, one of the primary rRNA binding proteins, it binds directly near the 3'-end of the 23S rRNA, where it nucleates assembly of the 50S subunit. The sequence is that of Large ribosomal subunit protein uL3 from Pseudomonas entomophila (strain L48).